Consider the following 224-residue polypeptide: Heme response regulator HssR (224 aa).

Residues 3–116 enclose the Response regulatory domain; the sequence is TCLIVDDDPK…ELMFRIKAVL (114 aa). Asp52 carries the 4-aspartylphosphate modification. A DNA-binding region (ompR/PhoB-type) is located at residues 124–222; sequence NNEVSIGNLT…VRGLGYKVDD (99 aa).

Post-translationally, phosphorylated by HssS.

The protein localises to the cytoplasm. Its function is as follows. Member of the two-component regulatory system HssS/HssR involved in intracellular heme homeostasis and tempering of staphylococcal virulence. Phosphorylated HssR binds to a direct repeat sequence within hrtAB promoter and activates the expression of hrtAB, an efflux pump, in response to extracellular heme, hemin, hemoglobin or blood. The sequence is that of Heme response regulator HssR (hssR) from Staphylococcus saprophyticus subsp. saprophyticus (strain ATCC 15305 / DSM 20229 / NCIMB 8711 / NCTC 7292 / S-41).